A 428-amino-acid chain; its full sequence is Protein clpf-1 (428 aa).

ATP-binding positions include glutamate 16, arginine 56, and 124-129; that span reads DVGKTT.

The protein belongs to the Clp1 family. Clp1 subfamily.

Its subcellular location is the nucleus. Its function is as follows. Required for endonucleolytic cleavage during polyadenylation-dependent pre-mRNA 3'-end formation. This is Protein clpf-1 from Caenorhabditis elegans.